Consider the following 1162-residue polypeptide: ATP-dependent helicase/deoxyribonuclease subunit B (1162 aa).

The region spanning 1 to 275 is the UvrD-like helicase ATP-binding domain; the sequence is MELNAYIGRA…QFFKQQYRFN (275 aa). Residue 8–15 coordinates ATP; it reads GRAGTGKS. The UvrD-like helicase C-terminal domain maps to 269–583; that stretch reads KQQYRFNNKD…SIGTMDLAKV (315 aa). [4Fe-4S] cluster-binding residues include Cys784, Cys1117, Cys1120, and Cys1126.

The protein belongs to the helicase family. AddB/RexB type 1 subfamily. In terms of assembly, heterodimer of AddA and AddB. Mg(2+) serves as cofactor. The cofactor is [4Fe-4S] cluster.

Functionally, the heterodimer acts as both an ATP-dependent DNA helicase and an ATP-dependent, dual-direction single-stranded exonuclease. Recognizes the chi site generating a DNA molecule suitable for the initiation of homologous recombination. The AddB subunit has 5' -&gt; 3' nuclease activity but not helicase activity. This is ATP-dependent helicase/deoxyribonuclease subunit B from Staphylococcus haemolyticus (strain JCSC1435).